Consider the following 209-residue polypeptide: 2-phospho-L-lactate guanylyltransferase (209 aa).

It belongs to the CofC family. Homodimer.

It catalyses the reaction (2S)-2-phospholactate + GTP + H(+) = (2S)-lactyl-2-diphospho-5'-guanosine + diphosphate. It functions in the pathway cofactor biosynthesis; coenzyme F420 biosynthesis. Its function is as follows. Guanylyltransferase that catalyzes the activation of (2S)-2-phospholactate (2-PL) as (2S)-lactyl-2-diphospho-5'-guanosine, via the condensation of 2-PL with GTP. It is involved in the biosynthesis of coenzyme F420, a hydride carrier cofactor. The chain is 2-phospho-L-lactate guanylyltransferase from Halobacterium salinarum (strain ATCC 29341 / DSM 671 / R1).